The following is a 123-amino-acid chain: Histone H2B (123 aa).

The disordered stretch occupies residues 1–32 (MAPKAPGKGAKKAAKSKAPRAPGDRKRKRTRR). Basic residues predominate over residues 9–18 (GAKKAAKSKA). Ser-110 carries O-linked (GlcNAc) serine glycosylation. A Glycyl lysine isopeptide (Lys-Gly) (interchain with G-Cter in ubiquitin) cross-link involves residue Lys-118.

The protein belongs to the histone H2B family. The nucleosome is a histone octamer containing two molecules each of H2A, H2B, H3 and H4 assembled in one H3-H4 heterotetramer and two H2A-H2B heterodimers. The octamer wraps approximately 147 bp of DNA. In terms of processing, monoubiquitination of Lys-118 gives a specific tag for epigenetic transcriptional activation and is also prerequisite for histone H3 'Lys-4' and 'Lys-79' methylation. Post-translationally, glcNAcylation at Ser-110 promotes monoubiquitination of Lys-118. It fluctuates in response to extracellular glucose, and associates with transcribed genes.

It localises to the nucleus. It is found in the chromosome. Core component of nucleosome. Nucleosomes wrap and compact DNA into chromatin, limiting DNA accessibility to the cellular machineries which require DNA as a template. Histones thereby play a central role in transcription regulation, DNA repair, DNA replication and chromosomal stability. DNA accessibility is regulated via a complex set of post-translational modifications of histones, also called histone code, and nucleosome remodeling. The chain is Histone H2B from Holothuria tubulosa (Tubular sea cucumber).